Reading from the N-terminus, the 344-residue chain is Aspartate-semialdehyde dehydrogenase (344 aa).

NADP(+)-binding positions include 10-13 (TGQV) and 38-39 (RS). Arg-101 is a binding site for phosphate. Catalysis depends on Cys-131, which acts as the Acyl-thioester intermediate. Residue Gln-158 participates in substrate binding. NADP(+) is bound at residue 161–162 (SG). Residue Lys-228 coordinates phosphate. Substrate is bound at residue Arg-250. His-257 serves as the catalytic Proton acceptor. Asn-326 serves as a coordination point for NADP(+).

The protein belongs to the aspartate-semialdehyde dehydrogenase family. Homodimer.

It catalyses the reaction L-aspartate 4-semialdehyde + phosphate + NADP(+) = 4-phospho-L-aspartate + NADPH + H(+). It participates in amino-acid biosynthesis; L-lysine biosynthesis via DAP pathway; (S)-tetrahydrodipicolinate from L-aspartate: step 2/4. It functions in the pathway amino-acid biosynthesis; L-methionine biosynthesis via de novo pathway; L-homoserine from L-aspartate: step 2/3. The protein operates within amino-acid biosynthesis; L-threonine biosynthesis; L-threonine from L-aspartate: step 2/5. Its function is as follows. Catalyzes the NADPH-dependent formation of L-aspartate-semialdehyde (L-ASA) by the reductive dephosphorylation of L-aspartyl-4-phosphate. The polypeptide is Aspartate-semialdehyde dehydrogenase (Corynebacterium glutamicum (strain ATCC 13032 / DSM 20300 / JCM 1318 / BCRC 11384 / CCUG 27702 / LMG 3730 / NBRC 12168 / NCIMB 10025 / NRRL B-2784 / 534)).